Reading from the N-terminus, the 149-residue chain is Calmodulin (149 aa).

The residue at position 2 (alanine 2) is an N-acetylalanine. 4 EF-hand domains span residues 8–43 (EQIAEFKEAFSLFDKDGDGTITTKELGTVMRSLGQN), 44–79 (PTEAELQDMINEVDADGNGTIDFPEFLTMMARKMKD), 81–116 (DSEEEIIEAFKVFDKDGNGFISAAELRHIMTNLGEK), and 117–149 (LTDEEVDEMIREADIDGDGQINYEEFVKMMMAK). Ca(2+) is bound by residues aspartate 21, aspartate 23, aspartate 25, threonine 27, glutamate 32, aspartate 57, aspartate 59, asparagine 61, threonine 63, glutamate 68, aspartate 94, aspartate 96, asparagine 98, and glutamate 105. The residue at position 116 (lysine 116) is an N6,N6,N6-trimethyllysine. The Ca(2+) site is built by aspartate 130, aspartate 132, aspartate 134, glutamine 136, and glutamate 141.

It belongs to the calmodulin family.

Functionally, calmodulin mediates the control of a large number of enzymes, ion channels and other proteins by Ca(2+). Among the enzymes to be stimulated by the calmodulin-Ca(2+) complex are a number of protein kinases and phosphatases. The chain is Calmodulin from Macrocystis pyrifera (Giant kelp).